The primary structure comprises 138 residues: uncharacterized protein (138 aa).

Transmembrane regions (helical) follow at residues 17 to 37, 43 to 63, and 117 to 137; these read LIVSTIYIVLFFAILNLTVFF, INLILKNSCVVSFVVVWLLVC, and FWWMNFSLYLLGSLISIVVSL.

The protein resides in the cell membrane. This is an uncharacterized protein from Mycoplasma pneumoniae (strain ATCC 29342 / M129 / Subtype 1) (Mycoplasmoides pneumoniae).